The primary structure comprises 214 residues: Adenylate kinase (214 aa).

Position 10 to 15 (10 to 15) interacts with ATP; sequence GVGKGT. The NMP stretch occupies residues 30 to 59; that stretch reads STGDILRAAVKELTPMGAKAKGYMDSGALV. AMP is bound by residues Thr31, Arg36, 57–59, 85–88, and Gln92; these read ALV and GFPR. Residues 126 to 163 are LID; the sequence is GRRACANCGAGYHVDFAPSKVAGVCDACSGQLVQREDD. An ATP-binding site is contributed by Arg127. Positions 130, 133, 150, and 153 each coordinate Zn(2+). Positions 160 and 171 each coordinate AMP. An ATP-binding site is contributed by Gly199.

It belongs to the adenylate kinase family. In terms of assembly, monomer.

The protein resides in the cytoplasm. The enzyme catalyses AMP + ATP = 2 ADP. It participates in purine metabolism; AMP biosynthesis via salvage pathway; AMP from ADP: step 1/1. In terms of biological role, catalyzes the reversible transfer of the terminal phosphate group between ATP and AMP. Plays an important role in cellular energy homeostasis and in adenine nucleotide metabolism. In Citrifermentans bemidjiense (strain ATCC BAA-1014 / DSM 16622 / JCM 12645 / Bem) (Geobacter bemidjiensis), this protein is Adenylate kinase.